The primary structure comprises 320 residues: Lipoyl synthase (320 aa).

Residues C67, C72, C78, C93, C97, C100, and S307 each coordinate [4Fe-4S] cluster. One can recognise a Radical SAM core domain in the interval 79–296 (FNHGTATFMI…REKAAEMGFE (218 aa)).

It belongs to the radical SAM superfamily. Lipoyl synthase family. [4Fe-4S] cluster is required as a cofactor.

Its subcellular location is the cytoplasm. It carries out the reaction [[Fe-S] cluster scaffold protein carrying a second [4Fe-4S](2+) cluster] + N(6)-octanoyl-L-lysyl-[protein] + 2 oxidized [2Fe-2S]-[ferredoxin] + 2 S-adenosyl-L-methionine + 4 H(+) = [[Fe-S] cluster scaffold protein] + N(6)-[(R)-dihydrolipoyl]-L-lysyl-[protein] + 4 Fe(3+) + 2 hydrogen sulfide + 2 5'-deoxyadenosine + 2 L-methionine + 2 reduced [2Fe-2S]-[ferredoxin]. It functions in the pathway protein modification; protein lipoylation via endogenous pathway; protein N(6)-(lipoyl)lysine from octanoyl-[acyl-carrier-protein]: step 2/2. Its function is as follows. Catalyzes the radical-mediated insertion of two sulfur atoms into the C-6 and C-8 positions of the octanoyl moiety bound to the lipoyl domains of lipoate-dependent enzymes, thereby converting the octanoylated domains into lipoylated derivatives. In Actinobacillus succinogenes (strain ATCC 55618 / DSM 22257 / CCUG 43843 / 130Z), this protein is Lipoyl synthase.